A 140-amino-acid polypeptide reads, in one-letter code: Ribosome-binding factor A (140 aa).

The protein belongs to the RbfA family. Monomer. Binds 30S ribosomal subunits, but not 50S ribosomal subunits or 70S ribosomes.

It is found in the cytoplasm. One of several proteins that assist in the late maturation steps of the functional core of the 30S ribosomal subunit. Associates with free 30S ribosomal subunits (but not with 30S subunits that are part of 70S ribosomes or polysomes). Required for efficient processing of 16S rRNA. May interact with the 5'-terminal helix region of 16S rRNA. The polypeptide is Ribosome-binding factor A (Cereibacter sphaeroides (strain ATCC 17023 / DSM 158 / JCM 6121 / CCUG 31486 / LMG 2827 / NBRC 12203 / NCIMB 8253 / ATH 2.4.1.) (Rhodobacter sphaeroides)).